The chain runs to 402 residues: Type II NADH:quinone oxidoreductase (402 aa).

FAD is bound by residues G12–A16, N39–K40, and V83. The active site involves E172. FAD contacts are provided by residues D302, A319–Q320, and K379.

Belongs to the NADH dehydrogenase family. FAD serves as cofactor.

It is found in the cell membrane. The catalysed reaction is a quinone + NADH + H(+) = a quinol + NAD(+). In terms of biological role, alternative, nonproton pumping NADH:quinone oxidoreductase that delivers electrons to the respiratory chain by oxidation of NADH and reduction of quinones, and contributes to the regeneration of NAD(+). The sequence is that of Type II NADH:quinone oxidoreductase from Staphylococcus epidermidis (strain ATCC 35984 / DSM 28319 / BCRC 17069 / CCUG 31568 / BM 3577 / RP62A).